Here is a 152-residue protein sequence, read N- to C-terminus: Transcriptional regulator MraZ (152 aa).

SpoVT-AbrB domains follow at residues alanine 5–glutamate 52 and alanine 81–threonine 124.

This sequence belongs to the MraZ family. Forms oligomers.

It localises to the cytoplasm. Its subcellular location is the nucleoid. Negatively regulates its own expression and that of the subsequent genes in the proximal part of the division and cell wall (dcw) gene cluster. Acts by binding directly to DNA. May also regulate the expression of genes outside the dcw cluster. The chain is Transcriptional regulator MraZ from Klebsiella pneumoniae (strain 342).